The chain runs to 320 residues: Ferrochelatase (320 aa).

The Fe cation site is built by His194 and Glu275.

This sequence belongs to the ferrochelatase family.

It localises to the cytoplasm. The catalysed reaction is heme b + 2 H(+) = protoporphyrin IX + Fe(2+). The protein operates within porphyrin-containing compound metabolism; protoheme biosynthesis; protoheme from protoporphyrin-IX: step 1/1. Functionally, catalyzes the ferrous insertion into protoporphyrin IX. This Xylella fastidiosa (strain M12) protein is Ferrochelatase.